The chain runs to 692 residues: MIGGDTRAASAHPGMASAQGPVATPSPEQPFPGTTSVSLARPVLRVWHGAHSSGLLPNLIAQHSPAMAQNGAVPSEATKKDQNLTRGNWGNQIEFVLTSVGYAVGLGNVWRFPYLCYRNGGGAFMFPYFIMLIFCGIPLFFMELSFGQFASQGCLGVWRISPMFKGVGYGMMVVSTYIGIYYNVVICIAFYYFFSSMTHVLPWAYCNNPWNTPDCAGVLDASNLTNGSRPAALSGNLSHLFNYTLQRTSPSEEYWRLYVLKLSDDIGNFGEVRLPLLGCLGVSWVVVFLCLIRGVKSSGKVVYFTATFPYVVLTILFVRGVTLEGAFTGIMYYLTPQWDKILEAKVWGDAASQIFYSLGCAWGGLITMASYNKFHNNCYRDSVIISITNCATSVYAGFVIFSILGFMANHLGVDVSRVADHGPGLAFVAYPEALTLLPISPLWSLLFFFMLILLGLGTQFCLLETLVTAIVDEVGNEWILQKKTYVTLGVAVAGFLLGIPLTSQAGIYWLLLMDNYAASFSLVVISCIMCVSIMYIYGHRNYFQDIQMMLGFPPPLFFQICWRFVSPAIIFFILIFTVIQYRPITYNHYQYPGWAVAIGFLMALSSVICIPLYALFQLCRTDGDTLLQRLKNATKPSRDWGPALLEHRTGRYAPTTTPSPEDGFEVQPLHPDKAQIPIVGSNGSSRFQDSRI.

The interval 1-34 (MIGGDTRAASAHPGMASAQGPVATPSPEQPFPGT) is disordered. The Cytoplasmic portion of the chain corresponds to 1-94 (MIGGDTRAAS…TRGNWGNQIE (94 aa)). 3 helical membrane passes run 95–115 (FVLTSVGYAVGLGNVWRFPYL), 122–142 (GAFMFPYFIMLIFCGIPLFFM), and 174–194 (VSTYIGIYYNVVICIAFYYFF). Topologically, residues 195–271 (SSMTHVLPWA…LSDDIGNFGE (77 aa)) are extracellular. 9 helical membrane passes run 272–292 (VRLPLLGCLGVSWVVVFLCLI), 301–321 (VVYFTATFPYVVLTILFVRGV), 346–366 (VWGDAASQIFYSLGCAWGGLI), 393–413 (SVYAGFVIFSILGFMANHLGV), 436–456 (LLPISPLWSLLFFFMLILLGL), 492–512 (VAGFLLGIPLTSQAGIYWLLL), 516–536 (YAASFSLVVISCIMCVSIMYI), 556–576 (LFFQICWRFVSPAIIFFILIF), and 596–616 (VAIGFLMALSSVICIPLYALF). The Cytoplasmic portion of the chain corresponds to 617-692 (QLCRTDGDTL…GSSRFQDSRI (76 aa)). Thr657 carries the post-translational modification Phosphothreonine. Residues Ser659 and Ser684 each carry the phosphoserine modification. The interval 681–692 (SNGSSRFQDSRI) is essential for interaction with EXOC1.

This sequence belongs to the sodium:neurotransmitter symporter (SNF) (TC 2.A.22) family. SLC6A9 subfamily. In terms of assembly, interacts with EXOC1; interaction increases the transporter capacity of SLC6A9 probably by promoting its insertion into the cell membrane. Interacts with EXOC3 and EXOC4. Expressed in the brain (at protein level). At 11 dpc, expressed in the ventral part of the ventricular zone. At 15 dpc, also expressed in adjacent mantle tissue and the meninges. Strongly expressed in 12 dpc and 15 dpc liver. In terms of tissue distribution, expressed in the brain.

Its subcellular location is the cell membrane. It catalyses the reaction glycine(out) + chloride(out) + 2 Na(+)(out) = glycine(in) + chloride(in) + 2 Na(+)(in). Its function is as follows. Sodium- and chloride-dependent glycine transporter which is essential for regulating glycine concentrations at inhibitory glycinergic synapses. Sodium- and chloride-dependent glycine transporter. The sequence is that of Sodium- and chloride-dependent glycine transporter 1 (Slc6a9) from Mus musculus (Mouse).